The sequence spans 144 residues: Large ribosomal subunit protein uL22 (144 aa).

Positions R124–Q137 are enriched in basic residues. The disordered stretch occupies residues R124–K144.

Belongs to the universal ribosomal protein uL22 family. As to quaternary structure, part of the 50S ribosomal subunit.

Its function is as follows. This protein binds specifically to 23S rRNA; its binding is stimulated by other ribosomal proteins, e.g. L4, L17, and L20. It is important during the early stages of 50S assembly. It makes multiple contacts with different domains of the 23S rRNA in the assembled 50S subunit and ribosome. In terms of biological role, the globular domain of the protein is located near the polypeptide exit tunnel on the outside of the subunit, while an extended beta-hairpin is found that lines the wall of the exit tunnel in the center of the 70S ribosome. The sequence is that of Large ribosomal subunit protein uL22 from Mycoplasmoides gallisepticum (strain R(low / passage 15 / clone 2)) (Mycoplasma gallisepticum).